The sequence spans 221 residues: MNYKVVEKFVSINGEGLKSGQLSVFIRFAGCNLNCNYCDTKWANEKDVKYTLMTEKEILSYIKETGVKNVTLTGGEPLLQDGIVELLNLLSLDSTLRVEIETNGSVSLENFLNFKNAPSFTMDYKLPDSSMENFMKTSNFKFLNKKDVIKFVVSSLKDLKKAMDIITEFNLSKKTNIYISPVFGRISPETIVDFMKDNKLNDVTLQIQIHKIIWNPNKRGV.

Substrate is bound by residues 12 to 14 (ING) and R27. Positions 18-216 (KSGQLSVFIR…IQIHKIIWNP (199 aa)) constitute a Radical SAM core domain. 3 residues coordinate [4Fe-4S] cluster: C31, C35, and C38. T40 provides a ligand contact to Mg(2+). Position 73 (T73) interacts with substrate. G75 provides a ligand contact to S-adenosyl-L-methionine.

Belongs to the radical SAM superfamily. 7-carboxy-7-deazaguanine synthase family. In terms of assembly, homodimer. It depends on [4Fe-4S] cluster as a cofactor. The cofactor is S-adenosyl-L-methionine. Mg(2+) serves as cofactor.

It carries out the reaction 6-carboxy-5,6,7,8-tetrahydropterin + H(+) = 7-carboxy-7-deazaguanine + NH4(+). It functions in the pathway purine metabolism; 7-cyano-7-deazaguanine biosynthesis. Its function is as follows. Catalyzes the complex heterocyclic radical-mediated conversion of 6-carboxy-5,6,7,8-tetrahydropterin (CPH4) to 7-carboxy-7-deazaguanine (CDG), a step common to the biosynthetic pathways of all 7-deazapurine-containing compounds. The chain is 7-carboxy-7-deazaguanine synthase from Clostridium acetobutylicum (strain ATCC 824 / DSM 792 / JCM 1419 / IAM 19013 / LMG 5710 / NBRC 13948 / NRRL B-527 / VKM B-1787 / 2291 / W).